A 245-amino-acid polypeptide reads, in one-letter code: Tegument protein UL51 homolog (245 aa).

The S-palmitoyl cysteine; by host moiety is linked to residue C10. Residues 225–245 are disordered; that stretch reads PVKSNLKSKHKPKRKASLVAV. Basic residues predominate over residues 230 to 245; it reads LKSKHKPKRKASLVAV.

The protein belongs to the herpesviridae UL51 family. Oligomerizes. Interacts with ORF55; this interaction mediates ORF55 incorporation to virions. In terms of processing, phosphorylated. Palmitoylation is necessary for Golgi localization.

The protein resides in the virion tegument. Its subcellular location is the host cytoplasm. The protein localises to the host Golgi apparatus. Plays several roles during the time course of infection, including egress of virus particles from the perinuclear space and secondary envelopment of cytoplasmic capsids that bud into specific trans-Golgi network (TGN)-derived membranes. The sequence is that of Tegument protein UL51 homolog from Equine herpesvirus 1 (strain Ab4p) (EHV-1).